A 282-amino-acid chain; its full sequence is MTAQLIDGNALSRQLRTEVAARTAALKSRGITPGLAVVLVGDNPASQVYVRNKVKACEDVGFHSVLEKYDASMSEEQLLARVQALNNDPSIHGILVQLPLPKHIDDHKVIEAISPLKDVDGFHVASAGALMVGQVGFKACTPYGCMKMLESIGMKDLRGKHAVVIGRSNIVGKPMAMMLLAANATVTVCHSGTADLAAMTRQADVVVAAVGKRNVLTADMVKPGAVVIDVGMNRNDEGKLCGDVDFEGVKQVAGYITPVPGGVGPMTITMLLVNTLEAAERL.

NADP(+) is bound by residues 166 to 168 (GRS) and S191.

It belongs to the tetrahydrofolate dehydrogenase/cyclohydrolase family. As to quaternary structure, homodimer.

The enzyme catalyses (6R)-5,10-methylene-5,6,7,8-tetrahydrofolate + NADP(+) = (6R)-5,10-methenyltetrahydrofolate + NADPH. The catalysed reaction is (6R)-5,10-methenyltetrahydrofolate + H2O = (6R)-10-formyltetrahydrofolate + H(+). Its pathway is one-carbon metabolism; tetrahydrofolate interconversion. Catalyzes the oxidation of 5,10-methylenetetrahydrofolate to 5,10-methenyltetrahydrofolate and then the hydrolysis of 5,10-methenyltetrahydrofolate to 10-formyltetrahydrofolate. The chain is Bifunctional protein FolD from Acidovorax ebreus (strain TPSY) (Diaphorobacter sp. (strain TPSY)).